The following is a 144-amino-acid chain: MAFYESIYILRADLTTEQVELVNKRFSDNVAATGGKVVRTELWGRRQLAYLVKKNVKGFYVFHILEGEGSMVHDLEAKLGIDEDVLKFQHVRIEDVSDKASPLAPCEEKGEEGKAEDAADELTTFGMADDDDLGDDDDTVEAGI.

A disordered region spans residues 99–144 (KASPLAPCEEKGEEGKAEDAADELTTFGMADDDDLGDDDDTVEAGI). The span at 106–117 (CEEKGEEGKAED) shows a compositional bias: basic and acidic residues. The span at 128-144 (ADDDDLGDDDDTVEAGI) shows a compositional bias: acidic residues.

This sequence belongs to the bacterial ribosomal protein bS6 family.

Its function is as follows. Binds together with bS18 to 16S ribosomal RNA. In Magnetococcus marinus (strain ATCC BAA-1437 / JCM 17883 / MC-1), this protein is Small ribosomal subunit protein bS6.